The primary structure comprises 238 residues: Probable transcriptional regulatory protein SPH_2064 (238 aa).

The protein belongs to the TACO1 family. YeeN subfamily.

The protein localises to the cytoplasm. This Streptococcus pneumoniae (strain Hungary19A-6) protein is Probable transcriptional regulatory protein SPH_2064.